The primary structure comprises 469 residues: Probable indole-3-acetic acid-amido synthetase GH3.13 (469 aa).

Positions 1-26 are disordered; it reads MTSTSSENAPDHDHDHDASSPAPATA. Over residues 9-18 the composition is skewed to basic and acidic residues; it reads APDHDHDHDA.

Belongs to the IAA-amido conjugating enzyme family.

Functionally, may catalyze the synthesis of indole-3-acetic acid (IAA)-amino acid conjugates, providing a mechanism for the plant to cope with the presence of excess auxin. This Oryza sativa subsp. japonica (Rice) protein is Probable indole-3-acetic acid-amido synthetase GH3.13 (GH3.13).